The primary structure comprises 535 residues: UDP-glucuronosyltransferase 1A1 (535 aa).

Residues 1-29 (MTVVCWSSRLLLLLPYLLLCVFGPSASHA) form the signal peptide. N-linked (GlcNAc...) asparagine glycosylation is found at N89, N297, and N435. The chain crosses the membrane as a helical span at residues 493-509 (VIGFLLAIVLTVVFIVF).

This sequence belongs to the UDP-glycosyltransferase family. As to quaternary structure, homodimers. Homooligomer. Interacts with UGT1A3, UGT1A4, UGT1A6, UGT1A7, UGT1A8, UGT1A9 and UGT1A10 to form heterodimers. As to expression, highly expressed in liver and at lower levels in colon, kidney, stomach and intestine.

Its subcellular location is the endoplasmic reticulum membrane. The enzyme catalyses glucuronate acceptor + UDP-alpha-D-glucuronate = acceptor beta-D-glucuronoside + UDP + H(+). It catalyses the reaction 17beta-estradiol + UDP-alpha-D-glucuronate = 17beta-estradiol 3-O-(beta-D-glucuronate) + UDP + H(+). It carries out the reaction 2-hydroxyestrone + UDP-alpha-D-glucuronate = 2-hydroxyestrone 3-O-(beta-D-glucuronate) + UDP + H(+). The catalysed reaction is 2-hydroxy-17beta-estradiol + UDP-alpha-D-glucuronate = 2-hydroxy-17beta-estradiol 3-O-(beta-D-glucuronate) + UDP + H(+). The enzyme catalyses 2-methoxy-17beta-estradiol + UDP-alpha-D-glucuronate = 2-methoxy-17beta-estradiol 3-O-(beta-D-glucuronate) + UDP + H(+). It catalyses the reaction 17alpha-estradiol + UDP-alpha-D-glucuronate = 17alpha-estradiol 3-O-(beta-D-glucuronate) + UDP + H(+). It carries out the reaction 16beta,17beta-estriol + UDP-alpha-D-glucuronate = 16beta,17beta-estriol 16-O-(beta-D-glucuronate) + UDP + H(+). The catalysed reaction is losartan + UDP-alpha-D-glucuronate = losartan-2-N-beta-D-glucuronide + UDP. The enzyme catalyses prunetin + UDP-alpha-D-glucuronate = prunetin-4'-O-beta-D-glucuronide + UDP. It catalyses the reaction SN-38 + UDP-alpha-D-glucuronate = SN-38 O-beta-D-glucuronide + UDP + H(+). It carries out the reaction (4Z,15Z)-bilirubin IXalpha + UDP-alpha-D-glucuronate = (4Z,15Z)-bilirubin IXalpha C12-beta-D-glucuronoside + UDP. The catalysed reaction is (4Z,15Z)-bilirubin IXalpha + UDP-alpha-D-glucuronate = (4Z,15Z)-bilirubin IXalpha C8-beta-D-glucuronoside + UDP. The enzyme catalyses (4Z,15Z)-bilirubin IXalpha C8-beta-D-glucuronoside + UDP-alpha-D-glucuronate = (4Z,15Z)-bilirubin IXalpha C8,C12-beta-D-bisglucuronoside + UDP. It catalyses the reaction (4Z,15Z)-bilirubin IXalpha C12-beta-D-glucuronoside + UDP-alpha-D-glucuronate = (4Z,15Z)-bilirubin IXalpha C8,C12-beta-D-bisglucuronoside + UDP. It carries out the reaction 8-iso-prostaglandin F2alpha + UDP-alpha-D-glucuronate = 8-iso-prostaglandin F2alpha-glucuronide + UDP + H(+). The catalysed reaction is (5Z,8Z,11Z,14Z)-eicosatetraenoate + UDP-alpha-D-glucuronate = O-[(5Z),(8Z),(11Z),(14Z)-eicosatetraenoyl]-beta-D-glucuronate + UDP. The enzyme catalyses 15-hydroxy-(5Z,8Z,11Z,13E)-eicosatetraenoate + UDP-alpha-D-glucuronate = 15-O-(beta-D-glucuronosyl)-(5Z,8Z,11Z,14Z)-eicosatetraenoate + UDP + H(+). It catalyses the reaction 20-hydroxy-(5Z,8Z,11Z,14Z)-eicosatetraenoate + UDP-alpha-D-glucuronate = 20-O-(beta-D-glucuronosyl)-(5Z,8Z,11Z,14Z)-eicosatetraenoate + UDP + H(+). It carries out the reaction prostaglandin B1 + UDP-alpha-D-glucuronate = 15-O-(beta-D-glucuronosyl)-prostaglandin B1 + UDP + H(+). The catalysed reaction is (E)-ferulate + UDP-alpha-D-glucuronate = (E)-4-O-(beta-D-glucuronosyl)-ferulate + UDP + H(+). The enzyme catalyses (E)-ferulate + UDP-alpha-D-glucuronate = (E)-ferulic acid beta-D-glucuronate ester + UDP. Its function is as follows. UDP-glucuronosyltransferase (UGT) that catalyzes phase II biotransformation reactions in which lipophilic substrates are conjugated with glucuronic acid to increase the metabolite's water solubility, thereby facilitating excretion into either the urine or bile. Essential for the elimination and detoxification of drugs, xenobiotics and endogenous compounds. Catalyzes the glucuronidation of endogenous estrogen hormones such as estradiol, estrone and estriol. Involved in the glucuronidation of bilirubin, a degradation product occurring in the normal catabolic pathway that breaks down heme in vertebrates. Involved in the glucuronidation of arachidonic acid (AA) and AA-derived eicosanoids including 15-HETE, 20-HETE, PGB1 and F2-isoprostane (8-iso-PGF2alpha). Involved in the glucuronidation of the phytochemical ferulic acid at the phenolic or the carboxylic acid group. Also catalyzes the glucuronidation the isoflavones genistein, daidzein, glycitein, formononetin, biochanin A and prunetin, which are phytoestrogens with anticancer and cardiovascular properties. Involved in the glucuronidation of the AGTR1 angiotensin receptor antagonist losartan, a drug which can inhibit the effect of angiotensin II. Involved in the biotransformation of 7-ethyl-10-hydroxycamptothecin (SN-38), the pharmacologically active metabolite of the anticancer drug irinotecan. This is UDP-glucuronosyltransferase 1A1 from Mus musculus (Mouse).